Reading from the N-terminus, the 752-residue chain is Zinc finger protein 184 (752 aa).

The KRAB domain occupies 28 to 99 (VTFKDVIVDF…EPSIPVGTPG (72 aa)). Residues S117, S122, and S200 each carry the phosphoserine modification. A Glycyl lysine isopeptide (Lys-Gly) (interchain with G-Cter in SUMO2) cross-link involves residue K207. 19 C2H2-type zinc fingers span residues 223–245 (CKCNECGKAFTYCSALIRHQRTH), 251–273 (YKCNECEKAFSRSENLINHQRIH), 279–301 (YKCDQCGKGFIEGPSLTQHQRIH), 307–329 (YKCDECGKAFSQRTHLVQHQRIH), 335–357 (YTCNECGKAFSQRGHFMEHQKIH), 363–385 (FKCDECDKTFTRSTHLTQHQKIH), 391–413 (YKCNECGKAFNGPSTFIRHHMIH), 419–441 (YECNECGKAFSQHSNLTQHQKTH), 447–469 (YDCAECGKSFSYWSSLAQHLKIH), 475–497 (YKCNECGKAFSYCSSLTQHRRIH), 503–525 (FECSECGKAFSYLSNLNQHQKTH), 531–553 (YECKECGKAFIRSSSLAKHERIH), 559–581 (YQCHECGKTFSYGSSLIQHRKIH), 587–609 (YKCNECGRAFNQNIHLTQHKRIH), 615–637 (YECAECGKAFRHCSSLAQHQKTH), 643–665 (YHCNKCEKAFSQSSHLAQHQRIH), 671–693 (YKCNECDKTFSRSTHLTEHQNTH), 699–721 (YNCNECRKTFSQSTYLIQHQRIH), and 727–749 (FGCNDCGKAFRYRSALNKHQRLH).

It belongs to the krueppel C2H2-type zinc-finger protein family.

Its subcellular location is the nucleus. Functionally, may be involved in transcriptional regulation. In Bos taurus (Bovine), this protein is Zinc finger protein 184 (ZNF184).